The sequence spans 520 residues: Laccase-2 (520 aa).

An N-terminal signal peptide occupies residues 1–19 (MRFSNAFVLVAACISSVLA). Plastocyanin-like domains lie at 21–145 (TKTF…FVVY), 157–305 (VDDE…LTLA), and 375–488 (TVPV…FAEA). Cu cation contacts are provided by His-82 and His-84. Cystine bridges form between Cys-103/Cys-509 and Cys-135/Cys-229. Residue Asn-108 is glycosylated (N-linked (GlcNAc...) asparagine). Residues His-127 and His-129 each coordinate Cu cation. N-linked (GlcNAc...) asparagine glycans are attached at residues Asn-241 and Asn-299. Residues His-417, His-420, His-422, His-470, Cys-471, His-472, and His-476 each coordinate Cu cation. Residue Asn-492 is glycosylated (N-linked (GlcNAc...) asparagine).

The protein belongs to the multicopper oxidase family. It depends on Cu cation as a cofactor.

It localises to the secreted. It carries out the reaction 4 hydroquinone + O2 = 4 benzosemiquinone + 2 H2O. In terms of biological role, lignin degradation and detoxification of lignin-derived products. The polypeptide is Laccase-2 (lcc2) (Agaricus bisporus (White button mushroom)).